The chain runs to 427 residues: Gamma-glutamyl phosphate reductase (427 aa).

The protein belongs to the gamma-glutamyl phosphate reductase family.

The protein resides in the cytoplasm. It carries out the reaction L-glutamate 5-semialdehyde + phosphate + NADP(+) = L-glutamyl 5-phosphate + NADPH + H(+). It functions in the pathway amino-acid biosynthesis; L-proline biosynthesis; L-glutamate 5-semialdehyde from L-glutamate: step 2/2. In terms of biological role, catalyzes the NADPH-dependent reduction of L-glutamate 5-phosphate into L-glutamate 5-semialdehyde and phosphate. The product spontaneously undergoes cyclization to form 1-pyrroline-5-carboxylate. The protein is Gamma-glutamyl phosphate reductase of Rhodospirillum rubrum (strain ATCC 11170 / ATH 1.1.1 / DSM 467 / LMG 4362 / NCIMB 8255 / S1).